We begin with the raw amino-acid sequence, 237 residues long: Methylosome subunit pICln (237 aa).

An N-acetylserine modification is found at Ser2. Phosphoserine is present on residues Ser102, Ser144, Ser193, Ser195, Ser198, and Ser210. The interval 135-159 is disordered; that stretch reads LHPDPEDEDSDDYDGEEYDVEAHEQ. A compositionally biased stretch (acidic residues) spans 139–153; sequence PEDEDSDDYDGEEYD. Thr223 carries the phosphothreonine modification.

It belongs to the pICln (TC 1.A.47) family. In terms of assembly, component of the methylosome, a 20S complex containing at least PRMT5/SKB1, WDR77/MEP50 and CLNS1A/pICln. May mediate SNRPD1 and SNRPD3 methylation. Forms a 6S pICln-Sm complex composed of CLNS1A/pICln, SNRPD1, SNRPD2, SNRPE, SNRPF and SNRPG; ring-like structure where CLNS1A/pICln mimics additional Sm proteins and which is unable to assemble into the core snRNP. Interacts with LSM10 and LSM11.

It is found in the cytoplasm. The protein resides in the cytosol. It localises to the nucleus. The protein localises to the cytoskeleton. In terms of biological role, involved in both the assembly of spliceosomal snRNPs and the methylation of Sm proteins. Chaperone that regulates the assembly of spliceosomal U1, U2, U4 and U5 small nuclear ribonucleoproteins (snRNPs), the building blocks of the spliceosome, and thereby plays an important role in the splicing of cellular pre-mRNAs. Most spliceosomal snRNPs contain a common set of Sm proteins SNRPB, SNRPD1, SNRPD2, SNRPD3, SNRPE, SNRPF and SNRPG that assemble in a heptameric protein ring on the Sm site of the small nuclear RNA to form the core snRNP (Sm core). In the cytosol, the Sm proteins SNRPD1, SNRPD2, SNRPE, SNRPF and SNRPG are trapped in an inactive 6S pICln-Sm complex by the chaperone CLNS1A that controls the assembly of the core snRNP. Dissociation by the SMN complex of CLNS1A from the trapped Sm proteins and their transfer to an SMN-Sm complex triggers the assembly of core snRNPs and their transport to the nucleus. The chain is Methylosome subunit pICln (CLNS1A) from Homo sapiens (Human).